The chain runs to 277 residues: Caspase-3 (277 aa).

M1 carries the N-acetylmethionine modification. Propeptides lie at residues 1–9 (MENTENSVD) and 10–28 (AKSFKNAETKILHGSKSMD). K11 is modified (N6-acetyllysine). Position 26 is a phosphoserine (S26). Catalysis depends on residues H121 and C163. At C163 the chain carries S-nitrosocysteine; in inhibited form.

Belongs to the peptidase C14A family. Heterotetramer that consists of two anti-parallel arranged heterodimers, each one formed by a 17 kDa (p17) and a 12 kDa (p12) subunit. Interacts with BIRC6/bruce. Cleavage by granzyme B, caspase-6, caspase-8 and caspase-10 generates the two active subunits. Additional processing of the propeptides is likely due to the autocatalytic activity of the activated protease. Active heterodimers between the small subunit of caspase-7 protease and the large subunit of caspase-3 also occur and vice versa. Post-translationally, S-nitrosylated on its catalytic site cysteine in unstimulated cell lines and denitrosylated upon activation of the Fas apoptotic pathway, associated with an increase in intracellular caspase activity. Fas therefore activates caspase-3 not only by inducing the cleavage of the caspase zymogen to its active subunits, but also by stimulating the denitrosylation of its active site thiol. In terms of processing, ubiquitinated by BIRC6; this activity is inhibited by DIABLO/SMAC.

The protein localises to the cytoplasm. It carries out the reaction Strict requirement for an Asp residue at positions P1 and P4. It has a preferred cleavage sequence of Asp-Xaa-Xaa-Asp-|- with a hydrophobic amino-acid residue at P2 and a hydrophilic amino-acid residue at P3, although Val or Ala are also accepted at this position.. Inhibited by BIRC6; following inhibition of BIRC6-caspase binding by DIABLO/SMAC, BIRC6 is subjected to caspase cleavage, leading to an increase in active caspases. Functionally, involved in the activation cascade of caspases responsible for apoptosis execution. At the onset of apoptosis, it proteolytically cleaves poly(ADP-ribose) polymerase PARP1 at a '216-Asp-|-Gly-217' bond. Cleaves and activates sterol regulatory element binding proteins (SREBPs) between the basic helix-loop-helix leucine zipper domain and the membrane attachment domain. Cleaves and activates caspase-6, -7 and -9 (CASP6, CASP7 and CASP9, respectively). Cleaves and inactivates interleukin-18 (IL18). Triggers cell adhesion in sympathetic neurons through RET cleavage. Cleaves IL-1 beta between an Asp and an Ala, releasing the mature cytokine which is involved in a variety of inflammatory processes. Cleaves and inhibits serine/threonine-protein kinase AKT1 in response to oxidative stress. Acts as an inhibitor of type I interferon production during virus-induced apoptosis by mediating cleavage of antiviral proteins CGAS, IRF3 and MAVS, thereby preventing cytokine overproduction. Also involved in pyroptosis by mediating cleavage and activation of gasdermin-E (GSDME). Cleaves XRCC4 and phospholipid scramblase proteins XKR4, XKR8 and XKR9, leading to promote phosphatidylserine exposure on apoptotic cell surface. Cleaves BIRC6 following inhibition of BIRC6-caspase binding by DIABLO/SMAC. The polypeptide is Caspase-3 (CASP3) (Canis lupus familiaris (Dog)).